A 203-amino-acid polypeptide reads, in one-letter code: Ribosomal RNA small subunit methyltransferase G (203 aa).

S-adenosyl-L-methionine-binding positions include Gly73, Leu78, 124–125 (VE), and Arg139.

It belongs to the methyltransferase superfamily. RNA methyltransferase RsmG family.

Its subcellular location is the cytoplasm. It carries out the reaction guanosine(527) in 16S rRNA + S-adenosyl-L-methionine = N(7)-methylguanosine(527) in 16S rRNA + S-adenosyl-L-homocysteine. Specifically methylates the N7 position of guanine in position 527 of 16S rRNA. The sequence is that of Ribosomal RNA small subunit methyltransferase G from Haemophilus influenzae (strain PittEE).